Consider the following 305-residue polypeptide: tRNA pseudouridine synthase B (305 aa).

Catalysis depends on aspartate 48, which acts as the Nucleophile.

It belongs to the pseudouridine synthase TruB family. Type 1 subfamily.

The enzyme catalyses uridine(55) in tRNA = pseudouridine(55) in tRNA. In terms of biological role, responsible for synthesis of pseudouridine from uracil-55 in the psi GC loop of transfer RNAs. This Actinobacillus pleuropneumoniae serotype 5b (strain L20) protein is tRNA pseudouridine synthase B.